Here is a 155-residue protein sequence, read N- to C-terminus: 6,7-dimethyl-8-ribityllumazine synthase (155 aa).

5-amino-6-(D-ribitylamino)uracil contacts are provided by residues Trp22, 56-58 (SFE), and 80-82 (AVI). Position 85–86 (85–86 (AT)) interacts with (2S)-2-hydroxy-3-oxobutyl phosphate. His88 functions as the Proton donor in the catalytic mechanism. Residue Phe113 participates in 5-amino-6-(D-ribitylamino)uracil binding. Arg127 contacts (2S)-2-hydroxy-3-oxobutyl phosphate.

This sequence belongs to the DMRL synthase family.

It catalyses the reaction (2S)-2-hydroxy-3-oxobutyl phosphate + 5-amino-6-(D-ribitylamino)uracil = 6,7-dimethyl-8-(1-D-ribityl)lumazine + phosphate + 2 H2O + H(+). It participates in cofactor biosynthesis; riboflavin biosynthesis; riboflavin from 2-hydroxy-3-oxobutyl phosphate and 5-amino-6-(D-ribitylamino)uracil: step 1/2. In terms of biological role, catalyzes the formation of 6,7-dimethyl-8-ribityllumazine by condensation of 5-amino-6-(D-ribitylamino)uracil with 3,4-dihydroxy-2-butanone 4-phosphate. This is the penultimate step in the biosynthesis of riboflavin. This Chloroflexus aurantiacus (strain ATCC 29364 / DSM 637 / Y-400-fl) protein is 6,7-dimethyl-8-ribityllumazine synthase.